The sequence spans 99 residues: U11-barytoxin-Tl1a (99 aa).

Residues 1-21 (MKTLVLVAVLGLASLYLLSYA) form the signal peptide. The propeptide occupies 22–50 (SEVQQISRDEEDFRALMASFGGIFDTEER). 3 disulfides stabilise this stretch: C57–C71, C64–C76, and C70–C90.

It belongs to the neurotoxin 10 (Hwtx-1) family. 25 (ICK4) subfamily. As to expression, expressed by the venom gland.

It is found in the secreted. Its function is as follows. Ion channel inhibitor. The protein is U11-barytoxin-Tl1a of Trittame loki (Brush-footed trapdoor spider).